Here is a 408-residue protein sequence, read N- to C-terminus: Translation initiation factor 2 subunit gamma (408 aa).

The tr-type G domain maps to 4-201 (QSEINIGLVG…TIEERIKTPK (198 aa)). A G1 region spans residues 13-20 (GHVDHGKT). Asp16, Thr20, Gly41, and Ser43 together coordinate Mg(2+). 16–21 (DHGKTT) lines the GTP pocket. The interval 41-45 (GISIR) is G2. Positions 56, 59, 71, and 74 each coordinate Zn(2+). The G3 stretch occupies residues 88–91 (DAPG). Residues 144-147 (NKID) and 179-181 (SAQ) each bind GTP. Residues 144 to 147 (NKID) form a G4 region. The segment at 179–181 (SAQ) is G5.

The protein belongs to the TRAFAC class translation factor GTPase superfamily. Classic translation factor GTPase family. EIF2G subfamily. Heterotrimer composed of an alpha, a beta and a gamma chain. Mg(2+) serves as cofactor.

It catalyses the reaction GTP + H2O = GDP + phosphate + H(+). Its function is as follows. eIF-2 functions in the early steps of protein synthesis by forming a ternary complex with GTP and initiator tRNA. This is Translation initiation factor 2 subunit gamma from Methanothermobacter thermautotrophicus (strain ATCC 29096 / DSM 1053 / JCM 10044 / NBRC 100330 / Delta H) (Methanobacterium thermoautotrophicum).